The sequence spans 204 residues: Inner membrane protein YagU (204 aa).

The Periplasmic portion of the chain corresponds to 1-14; it reads MNIFEQTPPNRRRY. The chain crosses the membrane as a helical span at residues 15-35; the sequence is GLAAFIGLIAGVVSAFVKWGA. Residues 36–100 lie on the Cytoplasmic side of the membrane; that stretch reads EVPLPPRSPV…VYTFAGHVFN (65 aa). Residues 101–121 form a helical membrane-spanning segment; it reads WVGVTHIIFSIVFAVGYCVVA. Residues 122–132 are Periplasmic-facing; it reads EVFPKIKLWQG. The helical transmembrane segment at 133–153 threads the bilayer; the sequence is LLAGALAQLFVHMISFPLMGL. Residues 154-204 lie on the Cytoplasmic side of the membrane; that stretch reads TPPLFDLPWYENVSEIFGHLVWFWSIEIIRRDLRNRITHEPDPEIPLGSNR.

Homodimer.

The protein localises to the cell inner membrane. The chain is Inner membrane protein YagU (yagU) from Escherichia coli (strain K12).